Reading from the N-terminus, the 392-residue chain is Fasciculation and elongation protein zeta-1 (392 aa).

Residues 1-36 (MEAPLVSLDEEFEDIRPSCTEEPEEKPQCLYGTSPH) are disordered. Ser-58 is subject to Phosphoserine. A disordered region spans residues 175 to 196 (MQNSPDPEEEEEVLEEEDGGEI). Positions 180 to 194 (DPEEEEEVLEEEDGG) are enriched in acidic residues. The stretch at 230–298 (SELTELLDRV…KKRRKEKGLS (69 aa)) forms a coiled coil. Residues Ser-298 and Ser-316 each carry the phosphoserine modification.

Belongs to the zygin family. Homodimer. Interacts with the NH2-terminal variable region (V1) of PKC zeta and weakly with that of PKC epsilon. Interacts with UBE4B and SAP30L. Interacts with SCOC and ULK1; SCOC interferes with ULK1-binding to FEZ1. Directly interacts with SCOC and UVRAG. Stabilizes the interaction between SCOC and UVRAG during amino acid starvation. Phosphorylated by protein kinase C zeta; which enhances interaction with UBE4B and polyubiquitination. In terms of processing, polyubiquitinated in a UBE4B-dependent manner; which does not lead to proteasomal degradation and may be important for neurogenic activity. Polyubiquitin linkage seems to be mainly through Lys-26.

The protein localises to the cytoplasm. Its subcellular location is the cytoskeleton. It is found in the microtubule organizing center. The protein resides in the centrosome. It localises to the cell membrane. May be involved in axonal outgrowth as component of the network of molecules that regulate cellular morphology and axon guidance machinery. May participate in the transport of mitochondria and other cargos along microtubules. The polypeptide is Fasciculation and elongation protein zeta-1 (Fez1) (Mus musculus (Mouse)).